A 226-amino-acid polypeptide reads, in one-letter code: uncharacterized protein (226 aa).

An ABC transporter domain is found at 4 to 226 (LQFQQVGYWY…FTVKENVAVV (223 aa)). 38–45 (GTSGTGKT) serves as a coordination point for ATP.

The protein belongs to the ABC transporter superfamily.

This is an uncharacterized protein from Bacillus subtilis (strain 168).